Here is a 227-residue protein sequence, read N- to C-terminus: Staphylococcal superantigen-like 10 (227 aa).

A signal peptide spans 1-30; the sequence is MKFTALAKATLALGILTTGTLTTEVHSGHA.

This sequence belongs to the staphylococcal/streptococcal toxin family. In terms of assembly, interacts with prothrombin/F2 and coagulation factor X/F12. Interacts with human CXCR4.

Its subcellular location is the secreted. Its function is as follows. Plays a role in the inhibition of host complement activation via the classical pathway by interacting with the Fc region of human IgG and thereby interfering with the IgG/C1q interaction. Also inhibits the penultimate step of plasma clotting by interacting with prothrombin/F2 and coagulation factor X/F12. Does not affect the protease activity of thrombin but interferes with the conversion of prothrombin to thrombin. Interacts with human receptor CXCR4 and specifically inhibits CXCL12-induced calcium mobilization and cell migration. This Staphylococcus aureus (strain NCTC 8325 / PS 47) protein is Staphylococcal superantigen-like 10.